The following is a 156-amino-acid chain: ATP synthase subunit b (156 aa).

A helical transmembrane segment spans residues 7–27 (LIAQFVVFFILAGFTMKFVWP).

It belongs to the ATPase B chain family. In terms of assembly, F-type ATPases have 2 components, F(1) - the catalytic core - and F(0) - the membrane proton channel. F(1) has five subunits: alpha(3), beta(3), gamma(1), delta(1), epsilon(1). F(0) has three main subunits: a(1), b(2) and c(10-14). The alpha and beta chains form an alternating ring which encloses part of the gamma chain. F(1) is attached to F(0) by a central stalk formed by the gamma and epsilon chains, while a peripheral stalk is formed by the delta and b chains.

The protein resides in the cell inner membrane. In terms of biological role, f(1)F(0) ATP synthase produces ATP from ADP in the presence of a proton or sodium gradient. F-type ATPases consist of two structural domains, F(1) containing the extramembraneous catalytic core and F(0) containing the membrane proton channel, linked together by a central stalk and a peripheral stalk. During catalysis, ATP synthesis in the catalytic domain of F(1) is coupled via a rotary mechanism of the central stalk subunits to proton translocation. Functionally, component of the F(0) channel, it forms part of the peripheral stalk, linking F(1) to F(0). This is ATP synthase subunit b from Herminiimonas arsenicoxydans.